Consider the following 775-residue polypeptide: Transcription activator of gluconeogenesis HCBG_00867 (775 aa).

Residues 1–70 (MTASTQNGSP…NAKDPLRPRR (70 aa)) form a disordered region. Polar residues-rich tracts occupy residues 21 to 41 (NQES…QSPA) and 48 to 60 (TAES…STAA). Residues 77 to 105 (CFACQRAHLTCGDERPCQRCIKRGLQDAC) constitute a DNA-binding region (zn(2)-C6 fungal-type). Disordered stretches follow at residues 179–248 (TQAK…PFGA), 286–351 (GAGD…NIYN), 556–592 (NLNV…AGGG), and 649–725 (QGKE…SPKQ). The segment covering 195-217 (MQDTSINPSAFQAPSPTSTPNFD) has biased composition (polar residues). Positions 218–229 (LSSNPPNRNLSS) are enriched in low complexity. Polar residues-rich tracts occupy residues 230-244 (AMTQ…QTQD), 292-323 (PSDS…TQSP), 334-351 (WNPS…NIYN), and 557-576 (LNVN…TPRN). Positions 657 to 668 (GSDGKGGGGGGD) are enriched in gly residues. The segment covering 669–713 (VAATAATTSTSTSNGANSSGHANANRNNTNPKNSSPPSSSSAAAA) has biased composition (low complexity).

Belongs to the ERT1/acuK family.

It is found in the nucleus. Its function is as follows. Transcription factor which regulates nonfermentable carbon utilization. Activator of gluconeogenetic genes. In Ajellomyces capsulatus (strain G186AR / H82 / ATCC MYA-2454 / RMSCC 2432) (Darling's disease fungus), this protein is Transcription activator of gluconeogenesis HCBG_00867.